Consider the following 268-residue polypeptide: Hydroxyethylthiazole kinase (268 aa).

Met-47 lines the substrate pocket. Arg-122 and Thr-168 together coordinate ATP. Ala-195 is a substrate binding site.

The protein belongs to the Thz kinase family. Requires Mg(2+) as cofactor.

The enzyme catalyses 5-(2-hydroxyethyl)-4-methylthiazole + ATP = 4-methyl-5-(2-phosphooxyethyl)-thiazole + ADP + H(+). It participates in cofactor biosynthesis; thiamine diphosphate biosynthesis; 4-methyl-5-(2-phosphoethyl)-thiazole from 5-(2-hydroxyethyl)-4-methylthiazole: step 1/1. Its function is as follows. Catalyzes the phosphorylation of the hydroxyl group of 4-methyl-5-beta-hydroxyethylthiazole (THZ). The polypeptide is Hydroxyethylthiazole kinase (Rhizobium rhizogenes (strain K84 / ATCC BAA-868) (Agrobacterium radiobacter)).